A 508-amino-acid chain; its full sequence is Transposase (508 aa).

The region spanning 3 to 65 (LLSVIRRWHF…PFADRLSAWL (63 aa)) is the HTH IS21-type domain. The Integrase catalytic domain occupies 124–299 (LAFEPGEAFQ…TIADIWVEEV (176 aa)).

This sequence belongs to the transposase IS21/IS408/IS1162 family.

In terms of biological role, required for the transposition of the insertion element. The polypeptide is Transposase (nmoT) (Aminobacter aminovorans (Chelatobacter heintzii)).